A 90-amino-acid chain; its full sequence is DNA-binding protein HRm (90 aa).

The protein belongs to the bacterial histone-like protein family.

Functionally, histone-like DNA-binding protein which is capable of wrapping DNA to stabilize it, and thus to prevent its denaturation under extreme environmental conditions. This is DNA-binding protein HRm (hupB) from Rhizobium meliloti (strain 1021) (Ensifer meliloti).